The chain runs to 405 residues: Serpin B12 (405 aa).

The tract at residues 64 to 83 (SQNESKEPDPCLKSNKQKAG) is disordered.

The protein belongs to the serpin family. Ov-serpin subfamily. In terms of assembly, interacts with SLFN12; as part of a pathway regulating cell differentiation. May interact with USP14. Expressed in many tissues, including brain, bone marrow, lymph node, heart, lung, liver, pancreas, testis, ovary, and intestine.

Its subcellular location is the cytoplasm. Functionally, inhibits trypsin and plasmin, but not thrombin, coagulation factor Xa, or urokinase-type plasminogen activator. May play a role in cell differentiation. The protein is Serpin B12 (SERPINB12) of Homo sapiens (Human).